The primary structure comprises 249 residues: DNA repair protein RecO (249 aa).

The protein belongs to the RecO family.

Functionally, involved in DNA repair and RecF pathway recombination. In Exiguobacterium sibiricum (strain DSM 17290 / CCUG 55495 / CIP 109462 / JCM 13490 / 255-15), this protein is DNA repair protein RecO.